Reading from the N-terminus, the 404-residue chain is Acetate kinase (404 aa).

Residue N7 participates in Mg(2+) binding. K14 is an ATP binding site. R98 lines the substrate pocket. The Proton donor/acceptor role is filled by D155. ATP-binding positions include 214–218 (HLGNG), 289–291 (DLR), and 337–341 (GIGEN). E390 contributes to the Mg(2+) binding site.

The protein belongs to the acetokinase family. In terms of assembly, homodimer. Mg(2+) serves as cofactor. It depends on Mn(2+) as a cofactor.

It is found in the cytoplasm. The enzyme catalyses acetate + ATP = acetyl phosphate + ADP. It functions in the pathway metabolic intermediate biosynthesis; acetyl-CoA biosynthesis; acetyl-CoA from acetate: step 1/2. Functionally, catalyzes the formation of acetyl phosphate from acetate and ATP. Can also catalyze the reverse reaction. The sequence is that of Acetate kinase from Rippkaea orientalis (strain PCC 8801 / RF-1) (Cyanothece sp. (strain PCC 8801)).